The chain runs to 74 residues: Acyl carrier protein (74 aa).

Residues 1 to 73 (MAVFEKVQEI…DLVAYVEEKS (73 aa)) enclose the Carrier domain. Position 35 is an O-(pantetheine 4'-phosphoryl)serine (Ser-35).

It belongs to the acyl carrier protein (ACP) family. In terms of processing, 4'-phosphopantetheine is transferred from CoA to a specific serine of apo-ACP by AcpS. This modification is essential for activity because fatty acids are bound in thioester linkage to the sulfhydryl of the prosthetic group.

The protein localises to the cytoplasm. The protein operates within lipid metabolism; fatty acid biosynthesis. Its function is as follows. Carrier of the growing fatty acid chain in fatty acid biosynthesis. The chain is Acyl carrier protein from Streptococcus pyogenes serotype M1.